Reading from the N-terminus, the 85-residue chain is U4-theraphotoxin-Hhn1q (85 aa).

The signal sequence occupies residues 1 to 22; the sequence is MKVTLIAILTCAAVLVLHTTAA. Positions 23–48 are excised as a propeptide; the sequence is EELEAESQLMEVGMPDTELAAVDEER. 3 disulfides stabilise this stretch: C52–C66, C56–C77, and C71–C82.

The protein belongs to the neurotoxin 12 (Hwtx-2) family. 02 (Hwtx-2) subfamily. As to expression, expressed by the venom gland.

The protein resides in the secreted. In terms of biological role, postsynaptic neurotoxin. This is U4-theraphotoxin-Hhn1q from Cyriopagopus hainanus (Chinese bird spider).